The sequence spans 334 residues: MPKRRDILAIVLIVLPWTLLITVWHQSSLAPLLAVHKDEGSDPRHEAPPGADPREYCMSDRDIVEVVRTEYVYTRPPPWSDTLPTIHVVTPTYSRPVQKAELTRMANTLLHVPNLHWLVVEDAPRRTPLTARLLRDTGLNYTHLHVETPRNYKLRGDARDPRIPRGTMQRNLALRWLRETFPRNSTQPGVVYFADDDNTYSLELFEEMRSTRRVSVWPVAFVGGLRYEAPRVNGAGKVVGWKTVFDPHRPFAIDMAGFAVNLRLILQRSQAYFKLRGVKGGYQESSLLRELVTLNDLEPKAANCTKILVWHTRTEKPVLVNEGKKGFTDPSVEI.

Over 1–6 the chain is Cytoplasmic; the sequence is MPKRRD. Residues 3–5 form an essential for transport from endoplasmic reticulum to Golgi apparatus and interaction with SAR1A region; the sequence is KRR. A helical; Signal-anchor for type II membrane protein transmembrane segment spans residues 7–27; the sequence is ILAIVLIVLPWTLLITVWHQS. The Lumenal segment spans residues 28 to 334; the sequence is SLAPLLAVHK…KGFTDPSVEI (307 aa). 91–93 is a UDP-alpha-D-glucuronate binding site; that stretch reads PTY. Phosphothreonine is present on residues T103 and T108. A UDP-alpha-D-glucuronate-binding site is contributed by D122. Residue N140 is glycosylated (N-linked (GlcNAc...) asparagine). R165 and R170 together coordinate UDP-alpha-D-glucuronate. Residue N184 is glycosylated (N-linked (GlcNAc...) asparagine). 195-197 contacts UDP-alpha-D-glucuronate; it reads DDD. A Mn(2+)-binding site is contributed by D197. Residues 245–254 form an interaction with galactose moiety of substrate glycoprotein region; the sequence is FDPHRPFAID. The active-site Proton donor/acceptor is E284. N303 carries N-linked (GlcNAc...) asparagine glycosylation. Residue 311–313 participates in UDP-alpha-D-glucuronate binding; it reads HTR.

The protein belongs to the glycosyltransferase 43 family. In terms of assembly, homodimer. Interacts with SAR1A. Mn(2+) is required as a cofactor. In terms of processing, the soluble form derives from the membrane form by proteolytic processing.

It is found in the golgi apparatus membrane. It localises to the secreted. The protein localises to the endoplasmic reticulum membrane. It catalyses the reaction 3-O-(beta-D-galactosyl-(1-&gt;3)-beta-D-galactosyl-(1-&gt;4)-beta-D-xylosyl)-L-seryl-[protein] + UDP-alpha-D-glucuronate = 3-O-(beta-D-GlcA-(1-&gt;3)-beta-D-Gal-(1-&gt;3)-beta-D-Gal-(1-&gt;4)-beta-D-Xyl)-L-seryl-[protein] + UDP + H(+). It participates in protein modification; protein glycosylation. Its function is as follows. Involved in the biosynthesis of L2/HNK-1 carbohydrate epitope on glycoproteins. Can also play a role in glycosaminoglycan biosynthesis. Substrates include asialo-orosomucoid (ASOR), asialo-fetuin, and asialo-neural cell adhesion molecule. Requires sphingomyelin for activity: stearoyl-sphingomyelin was the most effective, followed by palmitoyl-sphingomyelin and lignoceroyl-sphingomyelin. Activity was demonstrated only for sphingomyelin with a saturated fatty acid and not for that with an unsaturated fatty acid, regardless of the length of the acyl group. This Mus musculus (Mouse) protein is Galactosylgalactosylxylosylprotein 3-beta-glucuronosyltransferase 1.